The primary structure comprises 138 residues: Large ribosomal subunit protein uL16 (138 aa).

Over residues methionine 1–threonine 16 the composition is skewed to basic residues. Residues methionine 1 to glycine 23 form a disordered region.

The protein belongs to the universal ribosomal protein uL16 family. As to quaternary structure, part of the 50S ribosomal subunit.

Functionally, binds 23S rRNA and is also seen to make contacts with the A and possibly P site tRNAs. The sequence is that of Large ribosomal subunit protein uL16 from Corynebacterium glutamicum (strain R).